The following is a 346-amino-acid chain: Serine/threonine-protein phosphatase PP1(5.9) (346 aa).

Mn(2+) contacts are provided by Asp-102, His-104, Asp-130, and Asn-162. His-163 functions as the Proton donor in the catalytic mechanism. His-211 and His-287 together coordinate Mn(2+).

It belongs to the PPP phosphatase family. PP-1 subfamily. Requires Mn(2+) as cofactor.

It catalyses the reaction O-phospho-L-seryl-[protein] + H2O = L-seryl-[protein] + phosphate. The enzyme catalyses O-phospho-L-threonyl-[protein] + H2O = L-threonyl-[protein] + phosphate. This Trypanosoma brucei brucei protein is Serine/threonine-protein phosphatase PP1(5.9).